Consider the following 134-residue polypeptide: Small ribosomal subunit protein uS8c (134 aa).

The protein belongs to the universal ribosomal protein uS8 family. In terms of assembly, part of the 30S ribosomal subunit.

The protein localises to the plastid. Its function is as follows. One of the primary rRNA binding proteins, it binds directly to 16S rRNA central domain where it helps coordinate assembly of the platform of the 30S subunit. The protein is Small ribosomal subunit protein uS8c (rps8) of Cuscuta gronovii (Common dodder).